The primary structure comprises 57 residues: UPF0391 membrane protein RPD_3366 (57 aa).

2 helical membrane-spanning segments follow: residues 4–24 (WVVT…GGIA) and 30–50 (IAKV…VVGL).

The protein belongs to the UPF0391 family.

It is found in the cell membrane. In Rhodopseudomonas palustris (strain BisB5), this protein is UPF0391 membrane protein RPD_3366.